The chain runs to 451 residues: UPF0210 protein NMCC_1554 (451 aa).

This sequence belongs to the UPF0210 family. Homodimer.

The sequence is that of UPF0210 protein NMCC_1554 from Neisseria meningitidis serogroup C (strain 053442).